The following is a 473-amino-acid chain: Photosystem II CP43 reaction center protein (473 aa).

A propeptide spanning residues 1 to 14 is cleaved from the precursor; that stretch reads MKILYSLRRYFHVE. N-acetylthreonine is present on T15. T15 bears the Phosphothreonine mark. Transmembrane regions (helical) follow at residues 69 to 93, 134 to 155, 178 to 200, 255 to 275, and 291 to 312; these read LFEV…PHLA, LIGP…KDKN, KAIW…RKIT, KPFA…LSYS, and WFNN…ASQA. Position 367 (E367) interacts with [CaMn4O5] cluster. The chain crosses the membrane as a helical span at residues 447-471; it reads RARAAAAGFEKGIDRDSEPVLYMEP.

Belongs to the PsbB/PsbC family. PsbC subfamily. As to quaternary structure, PSII is composed of 1 copy each of membrane proteins PsbA, PsbB, PsbC, PsbD, PsbE, PsbF, PsbH, PsbI, PsbJ, PsbK, PsbL, PsbM, PsbT, PsbX, PsbY, PsbZ, Psb30/Ycf12, at least 3 peripheral proteins of the oxygen-evolving complex and a large number of cofactors. It forms dimeric complexes. Binds multiple chlorophylls and provides some of the ligands for the Ca-4Mn-5O cluster of the oxygen-evolving complex. It may also provide a ligand for a Cl- that is required for oxygen evolution. PSII binds additional chlorophylls, carotenoids and specific lipids. is required as a cofactor.

The protein resides in the plastid. It localises to the chloroplast thylakoid membrane. In terms of biological role, one of the components of the core complex of photosystem II (PSII). It binds chlorophyll and helps catalyze the primary light-induced photochemical processes of PSII. PSII is a light-driven water:plastoquinone oxidoreductase, using light energy to abstract electrons from H(2)O, generating O(2) and a proton gradient subsequently used for ATP formation. The protein is Photosystem II CP43 reaction center protein of Chara vulgaris (Common stonewort).